The chain runs to 251 residues: Hydroxyacylglutathione hydrolase (251 aa).

Residues His53, His55, Asp57, His58, His110, Asp127, and His165 each contribute to the Zn(2+) site.

This sequence belongs to the metallo-beta-lactamase superfamily. Glyoxalase II family. Monomer. Zn(2+) serves as cofactor.

It carries out the reaction an S-(2-hydroxyacyl)glutathione + H2O = a 2-hydroxy carboxylate + glutathione + H(+). It participates in secondary metabolite metabolism; methylglyoxal degradation; (R)-lactate from methylglyoxal: step 2/2. Its function is as follows. Thiolesterase that catalyzes the hydrolysis of S-D-lactoyl-glutathione to form glutathione and D-lactic acid. The chain is Hydroxyacylglutathione hydrolase from Salmonella typhi.